Reading from the N-terminus, the 302-residue chain is tRNA pseudouridine synthase B (302 aa).

D43 serves as the catalytic Nucleophile.

This sequence belongs to the pseudouridine synthase TruB family. Type 1 subfamily.

It carries out the reaction uridine(55) in tRNA = pseudouridine(55) in tRNA. Responsible for synthesis of pseudouridine from uracil-55 in the psi GC loop of transfer RNAs. This Burkholderia mallei (strain NCTC 10247) protein is tRNA pseudouridine synthase B.